Consider the following 431-residue polypeptide: Glutamyl-tRNA(Gln) amidotransferase subunit A (431 aa).

Residues Lys-55 and Ser-130 each act as charge relay system in the active site. Ser-154 functions as the Acyl-ester intermediate in the catalytic mechanism.

It belongs to the amidase family. GatA subfamily. As to quaternary structure, heterotrimer of A, B and C subunits.

It catalyses the reaction L-glutamyl-tRNA(Gln) + L-glutamine + ATP + H2O = L-glutaminyl-tRNA(Gln) + L-glutamate + ADP + phosphate + H(+). Its function is as follows. Allows the formation of correctly charged Gln-tRNA(Gln) through the transamidation of misacylated Glu-tRNA(Gln) in organisms which lack glutaminyl-tRNA synthetase. The reaction takes place in the presence of glutamine and ATP through an activated gamma-phospho-Glu-tRNA(Gln). The polypeptide is Glutamyl-tRNA(Gln) amidotransferase subunit A (Methanococcus maripaludis (strain C7 / ATCC BAA-1331)).